Consider the following 835-residue polypeptide: Leucine--tRNA ligase (835 aa).

The 'HIGH' region motif lies at 36 to 46 (PYPSGKIHVGH). Residues 602 to 606 (KMSKS) carry the 'KMSKS' region motif. ATP is bound at residue Lys-605.

This sequence belongs to the class-I aminoacyl-tRNA synthetase family.

It localises to the cytoplasm. The enzyme catalyses tRNA(Leu) + L-leucine + ATP = L-leucyl-tRNA(Leu) + AMP + diphosphate. The polypeptide is Leucine--tRNA ligase (Rickettsia africae (strain ESF-5)).